The chain runs to 151 residues: Large ribosomal subunit protein bL9 (151 aa).

Belongs to the bacterial ribosomal protein bL9 family.

In terms of biological role, binds to the 23S rRNA. This is Large ribosomal subunit protein bL9 from Lactobacillus delbrueckii subsp. bulgaricus (strain ATCC 11842 / DSM 20081 / BCRC 10696 / JCM 1002 / NBRC 13953 / NCIMB 11778 / NCTC 12712 / WDCM 00102 / Lb 14).